The sequence spans 116 residues: uncharacterized protein (116 aa).

Positions 64-116 are disordered; it reads RRFYSGTVNRNARSAGAASRSTSSVKRPLESKKRNARPETEKWCASYSAGNRR. A compositionally biased stretch (low complexity) spans 73-87; it reads RNARSAGAASRSTSS. Basic and acidic residues predominate over residues 90–105; the sequence is RPLESKKRNARPETEK.

This is an uncharacterized protein from Saccharomyces cerevisiae (strain ATCC 204508 / S288c) (Baker's yeast).